The following is a 749-amino-acid chain: Transcription factor RFX3 (749 aa).

The RFX-type winged-helix DNA-binding region spans 183–258 (HLQWLLDNYE…YHYYGIRVKP (76 aa)). A disordered region spans residues 663–699 (VSPGNLDKDEGSEVESEMDEELDDSSEPQAKREKTEL). Positions 674–688 (SEVESEMDEELDDSS) are enriched in acidic residues.

The protein belongs to the RFX family. In terms of assembly, heterodimer; heterodimerizes with RFX1 and RFX2, and RFX6.

The protein resides in the nucleus. Functionally, transcription factor required for ciliogenesis and islet cell differentiation during endocrine pancreas development. Essential for the differentiation of nodal monocilia and left-right asymmetry specification during embryogenesis. Required for the biogenesis of motile cilia by governing growth and beating efficiency of motile cells. Also required for ciliated ependymal cell differentiation. Regulates the expression of genes involved in ciliary assembly (DYNC2LI1, FOXJ1 and BBS4) and genes involved in ciliary motility (DNAH11, DNAH9 and DNAH5). Together with RFX6, participates in the differentiation of 4 of the 5 islet cell types during endocrine pancreas development, with the exception of pancreatic PP (polypeptide-producing) cells. Regulates transcription by forming a heterodimer with another RFX protein and binding to the X-box in the promoter of target genes. Represses transcription of MAP1A in non-neuronal cells but not in neuronal cells. This chain is Transcription factor RFX3 (RFX3), found in Homo sapiens (Human).